Consider the following 999-residue polypeptide: Probable basic-leucine zipper transcription factor N (999 aa).

Low complexity-rich tracts occupy residues 1 to 79 (MYQS…YQQQ) and 88 to 126 (NNVNINNNNNNNVNINSQNNVNNNNNNNNNNNNGNINNN). The disordered stretch occupies residues 1–126 (MYQSIPQQGN…NNNNGNINNN (126 aa)). 2 coiled-coil regions span residues 148-198 (QQQQ…MVLM) and 232-282 (GIQQ…QQIS). The span at 286–302 (ESASPYYSTPIQSNTML) shows a compositional bias: polar residues. 3 disordered regions span residues 286-406 (ESAS…SQDQ), 450-533 (QQLH…PTIN), and 601-620 (EKQKTRRRASQNLASRNYRQ). Residues 303-347 (SIPSSPGIPSSIPQLNNSNNINNNSNNNNNNNNNNNNNNINYNSN) show a composition bias toward low complexity. Residues 348 to 406 (MASNFISQHSNNGSNTSSPVPQTTYLQNSGGNFNAYNGSNTNSPITPSSYLQPTTSQDQ) show a composition bias toward polar residues. Positions 423–451 (IQQQQKILQQQQQQQLLLQQQIQQQQQQQ) form a coiled coil. Low complexity predominate over residues 450–517 (QQLHQPQSPQ…IIQPTTIQPQ (68 aa)). In terms of domain architecture, bZIP spans 601-664 (EKQKTRRRAS…KKLLHENNIL (64 aa)). The interval 602–632 (KQKTRRRASQNLASRNYRQRKKQYVNEVEDR) is basic motif. Residues 636-643 (IVQENERL) are leucine-zipper. Disordered regions lie at residues 665-711 (KSGG…VVET), 779-807 (QSCPFEDPSEKQHSDPNSSPIGDMPSPYE), and 870-899 (VNNGGNTKSKKTAASTSTTTTTTSTSTTTT). A compositionally biased stretch (acidic residues) spans 682-692 (SEDEDEDDFDQ). The stretch at 921-950 (HLVQLSGLLDKLKENIDHENETLIQTYEKL) forms a coiled coil.

Belongs to the bZIP family.

The protein resides in the nucleus. Functionally, probable transcriptional regulator. This Dictyostelium discoideum (Social amoeba) protein is Probable basic-leucine zipper transcription factor N (bzpN).